The following is a 397-amino-acid chain: Oxysterol-binding protein homolog C354.07c (397 aa).

2 N-linked (GlcNAc...) asparagine glycosylation sites follow: Asn-186 and Asn-195.

It belongs to the OSBP family.

It localises to the endoplasmic reticulum. In Schizosaccharomyces pombe (strain 972 / ATCC 24843) (Fission yeast), this protein is Oxysterol-binding protein homolog C354.07c.